A 403-amino-acid chain; its full sequence is Tyrosine--tRNA ligase (403 aa).

The 'HIGH' region signature appears at 42 to 51; the sequence is PTAPDLHLGH. The short motif at 226-230 is the 'KMSKS' region element; sequence KMSKS. Lys-229 serves as a coordination point for ATP. Residues 336–396 form the S4 RNA-binding domain; it reads MPISAVLNKA…GKKAFGRVTL (61 aa).

It belongs to the class-I aminoacyl-tRNA synthetase family. TyrS type 2 subfamily. As to quaternary structure, homodimer.

It is found in the cytoplasm. The catalysed reaction is tRNA(Tyr) + L-tyrosine + ATP = L-tyrosyl-tRNA(Tyr) + AMP + diphosphate + H(+). Its function is as follows. Catalyzes the attachment of tyrosine to tRNA(Tyr) in a two-step reaction: tyrosine is first activated by ATP to form Tyr-AMP and then transferred to the acceptor end of tRNA(Tyr). The polypeptide is Tyrosine--tRNA ligase (Pseudomonas savastanoi pv. phaseolicola (strain 1448A / Race 6) (Pseudomonas syringae pv. phaseolicola (strain 1448A / Race 6))).